A 380-amino-acid chain; its full sequence is Glucose ABC transporter permease protein TsgB13 (380 aa).

10 consecutive transmembrane segments (helical) span residues 20–40 (GTPV…LVAL), 59–81 (QFGL…AVYL), 94–114 (GQLL…SLPA), 115–135 (VALL…WAGI), 148–166 (IITS…SYLL), 202–222 (IPLF…VVAT), 255–275 (VYLF…IAEI), 282–301 (FRAA…ALLG), 305–325 (AVKV…GSSV), and 328–348 (AFGV…LFLI).

Belongs to the binding-protein-dependent transport system permease family. In terms of assembly, the complex is composed of two ATP-binding proteins (TsgD13), two transmembrane proteins (TsgB13 and TsgC13) and a solute-binding protein (TsgA13).

The protein localises to the cell membrane. Part of an ABC transporter complex involved in glucose import. Responsible for the translocation of the substrate across the membrane. This is Glucose ABC transporter permease protein TsgB13 (tsgB13) from Haloferax volcanii (strain ATCC 29605 / DSM 3757 / JCM 8879 / NBRC 14742 / NCIMB 2012 / VKM B-1768 / DS2) (Halobacterium volcanii).